An 85-amino-acid chain; its full sequence is Cysteine-rich venom protein 1 (85 aa).

The signal sequence occupies residues 1–21 (MCRYALIVLVVVVVATNLSEA). Cystine bridges form between cysteine 29–cysteine 63, cysteine 38–cysteine 59, cysteine 42–cysteine 53, cysteine 46–cysteine 84, and cysteine 65–cysteine 78. A TIL domain is found at 29–84 (CEPNRIYKTCGPACPPTCEDPDPDCNETPQCKAGCFCIPGLIENMKGGNCISPSLC).

The protein belongs to the serine protease inhibitor-like (TIL domain-containing) family. Expressed by the venom gland.

The protein resides in the secreted. In terms of biological role, may be a phenoloxidase inhibitor that stabilizes or inhibits venom phenoloxidase while it is stored in the venom sac. The protein is Cysteine-rich venom protein 1 of Pimpla hypochondriaca (Parasitoid wasp).